The sequence spans 477 residues: Bifunctional protein HldE (477 aa).

The interval 1 to 318 (MKVTLPEFER…ENAVRGRADT (318 aa)) is ribokinase. Lysine 179 is subject to N6-acetyllysine. ATP is bound at residue 195–198 (NLSE). Aspartate 264 is an active-site residue. The cytidylyltransferase stretch occupies residues 344–477 (MTNGVFDILH…IKKIQQDKKG (134 aa)).

This sequence in the N-terminal section; belongs to the carbohydrate kinase PfkB family. In the C-terminal section; belongs to the cytidylyltransferase family. Homodimer.

The catalysed reaction is D-glycero-beta-D-manno-heptose 7-phosphate + ATP = D-glycero-beta-D-manno-heptose 1,7-bisphosphate + ADP + H(+). The enzyme catalyses D-glycero-beta-D-manno-heptose 1-phosphate + ATP + H(+) = ADP-D-glycero-beta-D-manno-heptose + diphosphate. Its pathway is nucleotide-sugar biosynthesis; ADP-L-glycero-beta-D-manno-heptose biosynthesis; ADP-L-glycero-beta-D-manno-heptose from D-glycero-beta-D-manno-heptose 7-phosphate: step 1/4. It participates in nucleotide-sugar biosynthesis; ADP-L-glycero-beta-D-manno-heptose biosynthesis; ADP-L-glycero-beta-D-manno-heptose from D-glycero-beta-D-manno-heptose 7-phosphate: step 3/4. Catalyzes the phosphorylation of D-glycero-D-manno-heptose 7-phosphate at the C-1 position to selectively form D-glycero-beta-D-manno-heptose-1,7-bisphosphate. Its function is as follows. Catalyzes the ADP transfer from ATP to D-glycero-beta-D-manno-heptose 1-phosphate, yielding ADP-D-glycero-beta-D-manno-heptose. The protein is Bifunctional protein HldE of Escherichia coli O17:K52:H18 (strain UMN026 / ExPEC).